The sequence spans 393 residues: BEN domain-containing protein 5 (393 aa).

Residues 169–212 are a coiled coil; that stretch reads RVLYEELLRSYQQQQQEMKHIQHELERTRKQLVQQAKKLKDYGS. Positions 274–380 constitute a BEN domain; it reads GSGVWVNEEK…EKIMDINKSC (107 aa).

Its function is as follows. May act as a transcriptional repressor. The polypeptide is BEN domain-containing protein 5 (bend5) (Xenopus laevis (African clawed frog)).